We begin with the raw amino-acid sequence, 319 residues long: MSSDDAIIIRCPFDCEFAGDSISFISHLTTIHNSSVQTLAKNAYLCASEIANELNQNPNLKDQEILLLQIAQENSLKRVLRQQQKERREGKIKSLQCLFCNNEGLLNRQEWFEHSFHVHGLNIGLADNIVYINRLLEKIKNELESFRCLCCHVPCKNKKLLREHMNNKRHFRLDPKSSEYDEFYIINYASVTKSITISHSQFAINEDINETDDTISDINDEDAEPLSVECIFCTNFYEPVFCFEHCKIVHDWDIKKIQKDYSLDVYGAIRVINYSRKTKKKSIPAETDSFWKEPGWLIPVVPDDALIICLSEVIEDPRL.

The C2H2-type zinc-finger motif lies at 146–170; the sequence is FRCLCCHVPCKNKKLLREHMNNKRH.

The protein belongs to the ZNF277 family.

The protein resides in the nucleus. The sequence is that of Zinc finger protein C19B12.07c from Schizosaccharomyces pombe (strain 972 / ATCC 24843) (Fission yeast).